The following is a 1004-amino-acid chain: E3 ubiquitin-protein ligase NEDD4-like (1004 aa).

The region spanning 30–154 is the C2 domain; it reads LASHHSRGLE…TEDPTMERPY (125 aa). Disordered stretches follow at residues 207 to 230 and 272 to 407; these read SNDS…WEEK and AAHR…TPSV. One can recognise a WW 1 domain in the interval 221-254; the sequence is PPLPPGWEEKVDNLGRTYYVNHNNRSTQWHRPSL. S341 carries the phosphoserine modification. Position 347 is a phosphothreonine (T347). 2 stretches are compositionally biased toward polar residues: residues 347–359 and 366–376; these read TPDS…SSLI and RLRSCSVTDTV. At S371 the chain carries Phosphoserine; by WNK1 and WNK4. A Phosphothreonine; by SGK1 modification is found at T396. Residues 414–447 enclose the WW 2 domain; that stretch reads PGLPSGWEERKDAKGRTYYVNHNNRTTTWTRPIM. The tract at residues 453 to 523 is disordered; sequence GASGSATNSN…YNSPKPQHKV (71 aa). A Phosphoserine modification is found at S475. At S477 the chain carries Phosphoserine; by SGK1. Phosphoserine occurs at positions 478, 493, 504, 508, 512, and 516. The segment covering 489–500 has biased composition (basic and acidic residues); sequence GAKDSPIRRAVK. WW domains follow at residues 526-559 and 577-610; these read SFLP…DPRL and GPLP…DPRL. The HECT domain occupies 669-1003; that stretch reads RPDVLKARLW…VENAQGFEGV (335 aa). C971 (glycyl thioester intermediate) is an active-site residue.

In terms of assembly, interacts with UBE2E3. Interacts with NDFIP1; this interaction activates the E3 ubiquitin-protein ligase. Interacts with NDFIP2; this interaction activates the E3 ubiquitin-protein ligase. Interacts (via WW domains) with SCN1A. Interacts (via WW domains) with SCN2A. Interacts (via WW domains) with SCN3A. Interacts (via WW domains) with SCN5A. Interacts (via WW domains) with SCN8A. Interacts (via WW domains) with SCN9A. Interacts (via WW domains) with SCN10A. Interacts (via WW domains) with CLCN5. Interacts with SMAD2. Interacts with SMAD3. Interacts with SMAD6. Interacts with SMAD7. The phosphorylated form interacts with 14-3-3 proteins. Interacts with TNK2. Interacts with WNK1. Interacts with SGK1. Interacts (via C2 domain) with NPC2. Interacts with ARRDC4. Interacts with KCNQ1; promotes internalization of KCNQ1. Interacts (via domains WW1, 3 and 4) with USP36; the interaction inhibits ubiquitination of, at least, NTRK1, KCNQ2 and KCNQ3 by NEDD4L. Interacts with PRRG4 (via cytoplasmic domain). Interacts with LDLRAD3; the interaction is direct. Interacts with UBE2D2. Interacts with TTYH2 and TTYH3. In terms of processing, phosphorylated; which impairs interaction with SCNN. Interaction with YWHAH inhibits dephosphorylation. Aldosterone induces Ser-477 phosphorylation by SGK1. Post-translationally, auto-ubiquitinated. Deubiquitinated by USP36, no effect on NEDD4L protein levels. Both proteins interact and regulate each other's ubiquitination levels. In terms of tissue distribution, highly expressed in liver and kidney. Also expressed in heart, brain and lung. Isoform 1 is expressed in kidney, lung and gut. Isoform 3 is ubiquitously expressed.

Its subcellular location is the cytoplasm. It localises to the golgi apparatus. The protein resides in the endosome. The protein localises to the multivesicular body. It catalyses the reaction S-ubiquitinyl-[E2 ubiquitin-conjugating enzyme]-L-cysteine + [acceptor protein]-L-lysine = [E2 ubiquitin-conjugating enzyme]-L-cysteine + N(6)-ubiquitinyl-[acceptor protein]-L-lysine.. It carries out the reaction [E2 ubiquitin-conjugating enzyme]-S-ubiquitinyl-L-cysteine + [acceptor protein]-L-cysteine = [E2 ubiquitin-conjugating enzyme]-L-cysteine + [acceptor protein]-S-ubiquitinyl-L-cysteine.. Its pathway is protein modification; protein ubiquitination. Its activity is regulated as follows. Activated by NDFIP1- and NDFIP2-binding. Functionally, E3 ubiquitin-protein ligase that mediates the polyubiquitination of lysine and cysteine residues on target proteins and is thereby implicated in the regulation of various signaling pathways including autophagy, innate immunity or DNA repair. Inhibits TGF-beta signaling by triggering SMAD2 and TGFBR1 ubiquitination and proteasome-dependent degradation. Downregulates autophagy and cell growth by ubiquitinating and reducing cellular ULK1 or ASCT2 levels. Promotes ubiquitination and internalization of various plasma membrane channels such as ENaC, SCN2A/Nav1.2, SCN3A/Nav1.3, SCN5A/Nav1.5, SCN9A/Nav1.7, SCN10A/Nav1.8, KCNA3/Kv1.3, KCNH2, EAAT1, KCNQ2/Kv7.2, KCNQ3/Kv7.3 or CLC5. Promotes ubiquitination and degradation of SGK1 and TNK2. Ubiquitinates BRAT1 and this ubiquitination is enhanced in the presence of NDFIP1. Plays a role in dendrite formation by melanocytes. Involved in the regulation of TOR signaling. Ubiquitinates and regulates protein levels of NTRK1 once this one is activated by NGF. Plays a role in antiviral innate immunity by catalyzing 'Lys-29'-linked cysteine ubiquitination of TRAF3, resulting in enhanced 'Lys-48' and 'Lys-63'-linked ubiquitination of TRAF3. Ubiquitinates TTYH2 and TYYH3 and regulates protein levels of TTYH2. This Mus musculus (Mouse) protein is E3 ubiquitin-protein ligase NEDD4-like (Nedd4l).